We begin with the raw amino-acid sequence, 512 residues long: cAMP-dependent protein kinase catalytic subunit (512 aa).

Over residues 1–15 (MDTTAVASKGSTNVG) the composition is skewed to polar residues. 2 disordered regions span residues 1–79 (MDTT…SSLW) and 118–166 (IDNL…GLRD). A compositionally biased stretch (low complexity) spans 16–27 (SSTDTLSTSASL). Composition is skewed to polar residues over residues 32 to 52 (NAGS…SFNG) and 62 to 79 (SDAS…SSLW). Basic and acidic residues predominate over residues 143–166 (SRDGRGELGSEHGERRSAMDGLRD). The region spanning 201–456 (FNFLQTLGTG…SMDIIMHPWF (256 aa)) is the Protein kinase domain. Residues 207-215 (LGTGSFGRV) and lysine 230 contribute to the ATP site. The active-site Proton acceptor is aspartate 324. Threonine 356 carries the phosphothreonine modification. Positions 457–512 (RDISWDKILTRKIEVPYVPPIQAGMGDSSQFDAYADVATDYGTSEDPEFTSIFKDF) constitute an AGC-kinase C-terminal domain.

It belongs to the protein kinase superfamily. AGC Ser/Thr protein kinase family. cAMP subfamily.

It catalyses the reaction L-seryl-[protein] + ATP = O-phospho-L-seryl-[protein] + ADP + H(+). The catalysed reaction is L-threonyl-[protein] + ATP = O-phospho-L-threonyl-[protein] + ADP + H(+). With respect to regulation, activated by cAMP. This Schizosaccharomyces pombe (strain 972 / ATCC 24843) (Fission yeast) protein is cAMP-dependent protein kinase catalytic subunit (pka1).